The sequence spans 255 residues: Zinc import ATP-binding protein ZnuC (255 aa).

Residues 5–220 form the ABC transporter domain; that stretch reads VALEHIAVAF…PDFIAMFGYR (216 aa).

The protein belongs to the ABC transporter superfamily. Zinc importer (TC 3.A.1.15.5) family. In terms of assembly, the complex is composed of two ATP-binding proteins (ZnuC), two transmembrane proteins (ZnuB) and a solute-binding protein (ZnuA).

The protein localises to the cell inner membrane. It carries out the reaction Zn(2+)(out) + ATP(in) + H2O(in) = Zn(2+)(in) + ADP(in) + phosphate(in) + H(+)(in). Its function is as follows. Part of the ABC transporter complex ZnuABC involved in zinc import. Responsible for energy coupling to the transport system. In Sodalis glossinidius (strain morsitans), this protein is Zinc import ATP-binding protein ZnuC.